Consider the following 204-residue polypeptide: Tic20 family protein Ycf60 (204 aa).

4 helical membrane-spanning segments follow: residues 5–25 (LPSL…SFII), 87–107 (LMPL…IFFI), 133–153 (ILLF…PIEF), and 159–179 (GLMM…YSII).

This sequence belongs to the Tic20 family.

Its subcellular location is the plastid. It is found in the chloroplast membrane. This is Tic20 family protein Ycf60 (ycf60) from Gracilaria tenuistipitata var. liui (Red alga).